The following is a 230-amino-acid chain: UPF0502 protein Oter_3715 (230 aa).

It belongs to the UPF0502 family.

This Opitutus terrae (strain DSM 11246 / JCM 15787 / PB90-1) protein is UPF0502 protein Oter_3715.